Consider the following 528-residue polypeptide: Nucleoporin ASM4 (528 aa).

An FG 1 repeat occupies 2 to 3 (FG). Residues 23–50 (TTQMFQSQSQLQPQPQPQPQQQQQHLQF) are compositionally biased toward low complexity. 2 disordered regions span residues 23 to 64 (TTQM…FGNS) and 88 to 144 (IKNG…SMNA). 2 stretches are compositionally biased toward polar residues: residues 51–64 (NGSS…FGNS) and 97–108 (QHGQGNNPSWVN). The stretch at 61 to 62 (FG) is one FG 2 repeat. Over residues 110–125 (PKKRFTPHTVIRRKTT) the composition is skewed to basic residues. Residues 127-141 (QNSSSDINQNDDSSS) are compositionally biased toward low complexity. 3 FG repeats span residues 195-196 (FG), 274-275 (FG), and 291-292 (FG). One can recognise an RRM Nup35-type domain in the interval 265–394 (SSSLSAIIVF…IPYSKNAVEQ (130 aa)). S458 and S464 each carry phosphoserine. Residues 490 to 510 (NLLRNLESKMRQQEAKYRNNE) are a coiled coil. One copy of the FG 6 repeat lies at 523-524 (FG).

In terms of assembly, component of the nuclear pore complex (NPC). NPC constitutes the exclusive means of nucleocytoplasmic transport. NPCs allow the passive diffusion of ions and small molecules and the active, nuclear transport receptor-mediated bidirectional transport of macromolecules such as proteins, RNAs, ribonucleoparticles (RNPs), and ribosomal subunits across the nuclear envelope. Due to its 8-fold rotational symmetry, all subunits are present with 8 copies or multiples thereof. ASM4 may form a subcomplex with NUP53, NDC1, and NUP170. In terms of processing, phosphorylated by CDC28.

The protein resides in the nucleus. The protein localises to the nuclear pore complex. It localises to the nucleus membrane. Functionally, functions as a component of the nuclear pore complex (NPC). NPC components, collectively referred to as nucleoporins (NUPs), can play the role of both NPC structural components and of docking or interaction partners for transiently associated nuclear transport factors. Active directional transport is assured by both, a Phe-Gly (FG) repeat affinity gradient for these transport factors across the NPC and a transport cofactor concentration gradient across the nuclear envelope (GSP1 and GSP2 GTPases associated predominantly with GTP in the nucleus, with GDP in the cytoplasm). May have a mitosis control function. This Saccharomyces cerevisiae (strain ATCC 204508 / S288c) (Baker's yeast) protein is Nucleoporin ASM4 (ASM4).